A 95-amino-acid polypeptide reads, in one-letter code: Small ribosomal subunit protein uS14 (95 aa).

It belongs to the universal ribosomal protein uS14 family. As to quaternary structure, part of the 30S ribosomal subunit. Contacts proteins S3 and S10.

In terms of biological role, binds 16S rRNA, required for the assembly of 30S particles and may also be responsible for determining the conformation of the 16S rRNA at the A site. The polypeptide is Small ribosomal subunit protein uS14 (Fusobacterium nucleatum subsp. nucleatum (strain ATCC 25586 / DSM 15643 / BCRC 10681 / CIP 101130 / JCM 8532 / KCTC 2640 / LMG 13131 / VPI 4355)).